A 371-amino-acid polypeptide reads, in one-letter code: Dihydroorotate dehydrogenase (quinone) (371 aa).

Residues 79-83 (AGFDK) and T103 contribute to the FMN site. Position 83 (K83) interacts with substrate. 128–132 (NRMGF) serves as a coordination point for substrate. N156 and N189 together coordinate FMN. Residue N189 coordinates substrate. S192 serves as the catalytic Nucleophile. Substrate is bound at residue N194. K225 and T253 together coordinate FMN. Residue 254-255 (NT) participates in substrate binding. Residues G279, G308, and 329–330 (YT) each bind FMN.

This sequence belongs to the dihydroorotate dehydrogenase family. Type 2 subfamily. Monomer. The cofactor is FMN.

It is found in the cell membrane. The catalysed reaction is (S)-dihydroorotate + a quinone = orotate + a quinol. Its pathway is pyrimidine metabolism; UMP biosynthesis via de novo pathway; orotate from (S)-dihydroorotate (quinone route): step 1/1. Functionally, catalyzes the conversion of dihydroorotate to orotate with quinone as electron acceptor. This is Dihydroorotate dehydrogenase (quinone) from Corynebacterium glutamicum (strain ATCC 13032 / DSM 20300 / JCM 1318 / BCRC 11384 / CCUG 27702 / LMG 3730 / NBRC 12168 / NCIMB 10025 / NRRL B-2784 / 534).